A 335-amino-acid chain; its full sequence is Probable cytosolic iron-sulfur protein assembly protein Ciao1 (335 aa).

WD repeat units lie at residues 12-51, 57-96, 101-140, 146-185, 192-231, 250-289, and 301-335; these read GHKG…WSTK, GHKR…FECN, GHEN…EFEC, SHTQ…NDWD, SHTS…NSAG, QHSR…KPDE, and AHDQ…KVTE.

This sequence belongs to the WD repeat CIA1 family.

Its function is as follows. Essential component of the cytosolic iron-sulfur (Fe/S) protein assembly machinery. Required for the maturation of extramitochondrial Fe/S proteins. In Drosophila erecta (Fruit fly), this protein is Probable cytosolic iron-sulfur protein assembly protein Ciao1.